A 720-amino-acid chain; its full sequence is Inactive serine protease PAMR1 (720 aa).

The signal sequence occupies residues Met1 to Ser21. 8 disulfides stabilise this stretch: Cys128–Cys150, Cys177–Cys199, Cys239–Cys250, Cys244–Cys260, Cys262–Cys271, Cys280–Cys329, Cys315–Cys342, and Cys414–Cys442. Residues Cys128–Ile236 form the CUB domain. The 38-residue stretch at Glu235 to Glu272 folds into the EGF-like domain. Sushi domains follow at residues Arg278–Lys344 and Ala387–Pro444. One can recognise a Peptidase S1 domain in the interval Ile445 to Lys720. Asn451 is a glycosylation site (N-linked (GlcNAc...) asparagine). The cysteines at positions 489 and 505 are disulfide-linked. N-linked (GlcNAc...) asparagine glycosylation is present at Asn614. Intrachain disulfides connect Cys630/Cys649 and Cys661/Cys697.

Belongs to the peptidase S1 family.

The protein resides in the secreted. Functionally, may play a role in regeneration of skeletal muscle. This is Inactive serine protease PAMR1 (PAMR1) from Pongo abelii (Sumatran orangutan).